Consider the following 345-residue polypeptide: Alpha-2-HS-glycoprotein (345 aa).

An N-terminal signal peptide occupies residues 1–18; it reads MKSLVLLLCFAQLWGCQS. The 115-residue stretch at 19–133 folds into the Cystatin fetuin-A-type 1 domain; that stretch reads APQGTGLGFR…QFRVMHTQCH (115 aa). 6 cysteine pairs are disulfide-bonded: Cys-32–Cys-336, Cys-89–Cys-100, Cys-114–Cys-132, Cys-146–Cys-149, Cys-208–Cys-219, and Cys-230–Cys-247. Asn-99 is a glycosylation site (N-linked (GlcNAc...) asparagine). A Phosphoserine modification is found at Ser-134. Phosphothreonine is present on Thr-135. Position 138 is a phosphoserine (Ser-138). A Cystatin fetuin-A-type 2 domain is found at 144–250; sequence KLCPRCPLLT…EEVSVACKLF (107 aa). Residues Asn-156 and Asn-176 are each glycosylated (N-linked (GlcNAc...) asparagine). A phosphoserine mark is found at Ser-305, Ser-309, Ser-312, and Ser-314. The disordered stretch occupies residues 312–334; that stretch reads SASGETLHSPKVGQPGAAGPVSP.

It belongs to the fetuin family. In terms of processing, phosphorylated by FAM20C in the extracellular medium. In terms of tissue distribution, liver is the major site of synthesis, but fetuin is also expressed in limb buds and other extrahepatic tissues during development.

The protein localises to the secreted. Functionally, probably involved in differentiation. In terms of biological role, (Microbial infection) Facilitates invasion of hepatocytes by Plasmodium berghei sporozoites. This Mus musculus (Mouse) protein is Alpha-2-HS-glycoprotein (Ahsg).